The primary structure comprises 419 residues: UDP-N-acetylglucosamine 1-carboxyvinyltransferase (419 aa).

Residue 22–23 (KN) coordinates phosphoenolpyruvate. Residue arginine 95 coordinates UDP-N-acetyl-alpha-D-glucosamine. The active-site Proton donor is cysteine 119. Cysteine 119 carries the post-translational modification 2-(S-cysteinyl)pyruvic acid O-phosphothioketal. UDP-N-acetyl-alpha-D-glucosamine-binding positions include 164-167 (KVSV), aspartate 308, and isoleucine 330.

This sequence belongs to the EPSP synthase family. MurA subfamily.

The protein resides in the cytoplasm. The enzyme catalyses phosphoenolpyruvate + UDP-N-acetyl-alpha-D-glucosamine = UDP-N-acetyl-3-O-(1-carboxyvinyl)-alpha-D-glucosamine + phosphate. It functions in the pathway cell wall biogenesis; peptidoglycan biosynthesis. Its function is as follows. Cell wall formation. Adds enolpyruvyl to UDP-N-acetylglucosamine. The sequence is that of UDP-N-acetylglucosamine 1-carboxyvinyltransferase from Rickettsia akari (strain Hartford).